Consider the following 481-residue polypeptide: UDP-N-acetylmuramoyl-L-alanyl-D-glutamate--L-lysine ligase (481 aa).

S42 provides a ligand contact to UDP-N-acetyl-alpha-D-muramoyl-L-alanyl-D-glutamate. Residue 118–124 participates in ATP binding; that stretch reads GTKGKTT. Residues N158, 160 to 161, S187, and R195 each bind UDP-N-acetyl-alpha-D-muramoyl-L-alanyl-D-glutamate; that span reads TT. K229 is modified (N6-carboxylysine). The L-lysine recognition motif signature appears at 404–407; the sequence is DDPN.

It belongs to the MurCDEF family. MurE subfamily. Carboxylation is probably crucial for Mg(2+) binding and, consequently, for the gamma-phosphate positioning of ATP.

Its subcellular location is the cytoplasm. It carries out the reaction UDP-N-acetyl-alpha-D-muramoyl-L-alanyl-D-glutamate + L-lysine + ATP = UDP-N-acetyl-alpha-D-muramoyl-L-alanyl-gamma-D-glutamyl-L-lysine + ADP + phosphate + H(+). It participates in cell wall biogenesis; peptidoglycan biosynthesis. In terms of biological role, catalyzes the addition of L-lysine to the nucleotide precursor UDP-N-acetylmuramoyl-L-alanyl-D-glutamate (UMAG) in the biosynthesis of bacterial cell-wall peptidoglycan. This is UDP-N-acetylmuramoyl-L-alanyl-D-glutamate--L-lysine ligase from Streptococcus thermophilus (strain ATCC BAA-491 / LMD-9).